Consider the following 373-residue polypeptide: Envelope glycoprotein C homolog (373 aa).

The N-terminal stretch at 1 to 25 (MVSNMRSTRTALTGWVGIFLVLSLQ) is a signal peptide. Residues 58-93 (EVPNSPTTELSTTVATKTAVPTTESTSSSEAHRNSS) form a disordered region. Positions 59-68 (VPNSPTTELS) are enriched in polar residues. Residues 69–80 (TTVATKTAVPTT) show a composition bias toward low complexity. N-linked (GlcNAc...) asparagine; by host glycosylation is found at Asn91, Asn111, Asn203, and Asn345. The Ig-like domain occupies 249–347 (PASVDVLAPP…GDMISTSNAT (99 aa)).

This sequence belongs to the herpesviridae glycoprotein C family.

The polypeptide is Envelope glycoprotein C homolog (gC) (Gallus gallus (Chicken)).